A 391-amino-acid chain; its full sequence is MASGDESKRRLTILGSTGSIGTNTLDVVERLGGRNRFEIAALTGNGNIPLLADQARRMGAELAVTADEHRYGELKDALGGSGIEVAAGRSGLIEAAERDAGWLMAAIVGNAGLGPTLAAARRGADIALANKECLVSAGSLFIEAVAKGGGRLLPVDSEHNAIFQVLENDQRHAVERIILTASGGPFRTKSLEEMRHVTADIARAHPNWSMGLKISIDSASMFNKALEMIEARHLFRLRPDQIEVIVHPQSVIHSMVGYSDGSVLAQLGCPDMRTAIGYALTYPKRCDLPIERLDFAKLARLDFEAPDEARFPALRLARRAMQAGGIQGAVLNGAKETALEAFIKGRIGFLAMAEIVEKVMDRLSDLPAAVTMDDVFAADEKARLTAAGLIQ.

Residues T17, G18, S19, I20, N47, and N130 each contribute to the NADPH site. K131 is a 1-deoxy-D-xylulose 5-phosphate binding site. E132 contributes to the NADPH binding site. Residue D156 participates in Mn(2+) binding. 1-deoxy-D-xylulose 5-phosphate contacts are provided by S157, E158, S182, and H205. Position 158 (E158) interacts with Mn(2+). G211 serves as a coordination point for NADPH. 4 residues coordinate 1-deoxy-D-xylulose 5-phosphate: S218, N223, K224, and E227. Position 227 (E227) interacts with Mn(2+).

This sequence belongs to the DXR family. Mg(2+) serves as cofactor. Requires Mn(2+) as cofactor.

It carries out the reaction 2-C-methyl-D-erythritol 4-phosphate + NADP(+) = 1-deoxy-D-xylulose 5-phosphate + NADPH + H(+). The protein operates within isoprenoid biosynthesis; isopentenyl diphosphate biosynthesis via DXP pathway; isopentenyl diphosphate from 1-deoxy-D-xylulose 5-phosphate: step 1/6. Functionally, catalyzes the NADPH-dependent rearrangement and reduction of 1-deoxy-D-xylulose-5-phosphate (DXP) to 2-C-methyl-D-erythritol 4-phosphate (MEP). This Sinorhizobium fredii (strain NBRC 101917 / NGR234) protein is 1-deoxy-D-xylulose 5-phosphate reductoisomerase.